The following is a 687-amino-acid chain: Glycine--tRNA ligase beta subunit (687 aa).

Belongs to the class-II aminoacyl-tRNA synthetase family. Tetramer of two alpha and two beta subunits.

It localises to the cytoplasm. It carries out the reaction tRNA(Gly) + glycine + ATP = glycyl-tRNA(Gly) + AMP + diphosphate. The sequence is that of Glycine--tRNA ligase beta subunit from Geotalea daltonii (strain DSM 22248 / JCM 15807 / FRC-32) (Geobacter daltonii).